We begin with the raw amino-acid sequence, 359 residues long: Acidic skeletal organic matrix protein (359 aa).

The N-terminal stretch at 1-26 (MLAPRLAFVLLLSSYFGSILITSVES) is a signal peptide. 2 disordered regions span residues 60–83 (FEED…EDFD) and 224–254 (SEAE…DPNE). Positions 66 to 89 (DDDDEDNEESENEVEDFDDENALS) form a coiled coil.

Component of the acid-insoluble and acid-soluble organic matrix of the aragonitic skeleton (at protein level).

It localises to the secreted. The polypeptide is Acidic skeletal organic matrix protein (Acropora millepora (Staghorn coral)).